A 225-amino-acid chain; its full sequence is Octanoyltransferase (225 aa).

One can recognise a BPL/LPL catalytic domain in the interval 29 to 210 (PDTDDEIWVV…RLIAHLDGAT (182 aa)). Residues 69–76 (RGGQITYH), 141–143 (ALG), and 154–156 (GLS) contribute to the substrate site. C172 serves as the catalytic Acyl-thioester intermediate.

Belongs to the LipB family.

It localises to the cytoplasm. It catalyses the reaction octanoyl-[ACP] + L-lysyl-[protein] = N(6)-octanoyl-L-lysyl-[protein] + holo-[ACP] + H(+). The protein operates within protein modification; protein lipoylation via endogenous pathway; protein N(6)-(lipoyl)lysine from octanoyl-[acyl-carrier-protein]: step 1/2. Catalyzes the transfer of endogenously produced octanoic acid from octanoyl-acyl-carrier-protein onto the lipoyl domains of lipoate-dependent enzymes. Lipoyl-ACP can also act as a substrate although octanoyl-ACP is likely to be the physiological substrate. This chain is Octanoyltransferase, found in Burkholderia pseudomallei (strain K96243).